We begin with the raw amino-acid sequence, 141 residues long: Large ribosomal subunit protein uL11 (141 aa).

This sequence belongs to the universal ribosomal protein uL11 family. In terms of assembly, part of the ribosomal stalk of the 50S ribosomal subunit. Interacts with L10 and the large rRNA to form the base of the stalk. L10 forms an elongated spine to which L12 dimers bind in a sequential fashion forming a multimeric L10(L12)X complex. Post-translationally, one or more lysine residues are methylated.

In terms of biological role, forms part of the ribosomal stalk which helps the ribosome interact with GTP-bound translation factors. This chain is Large ribosomal subunit protein uL11, found in Levilactobacillus brevis (strain ATCC 367 / BCRC 12310 / CIP 105137 / JCM 1170 / LMG 11437 / NCIMB 947 / NCTC 947) (Lactobacillus brevis).